Consider the following 790-residue polypeptide: MRTYHCFWLLFWAGQPHQSFLTLLSKRTSGFPEKEKVLVLSGNSRRDLSRSKRSWMWNQFFLLEEYTGTDYQYVGKLHSDQDKGDGSLKYILSGDGAGDLFIINENTGDIQATKRLDREEKPVYILRAQAINRRTGRPVEPESEFIIKIHDINDNEPMFTKDVYNASIPEMSDVGTFVVQVTATDADDPTYGNSAKVVYSILQGQPYFSVESETGIIKTALLNMDRENREQYQVVIQAKDMGGQMGGLSGTTTVNITLTDVNDNPPRFPQSTYQFRAPESTPPDSPIGRIKANDADVDENAEIEYSITEGDGYDMFGITTDKDTQEGIITVKKALDFENKNLYILKVEATNTHVDPRFLYLGPFKDSATIRIQVEDVDEPPVFSRPAYIIEVKEDVPINSVIGTVTAQDPDAAKNPVKYSVDRHTDMDRVFNINSGNGSIFTSKTLDRETLLWHNITVIAAEINNPKQSSRVPVFIKVLDVNDNAPEFAMFYETFVCENAKAEQLIQTLSAVDKDDSYSGHQFSFSIAPEAASSSNFTLQDNRDNTAGIFTRKIRYNRHEMSTYLLPVVISDNDYPIQSSTETVTIRVCACDHRGKMLSCNAEALIHPTGLSTGALIAILLCIIILLVTVVLFAALRRQRKKEPLIISKEDIRDNIVSYNDEGGGEEDTQAFDIGTLRNPEAIDDNKLRRDIVPETLFMPRRTATARDNTDVRDFINQRLKENDTDPAAPPYDSLATYAYEGNGSVAESLSSLESVTTDGDQDYDYLSDWGPRFKKLADMYGSMDSDKDS.

A signal peptide spans methionine 1 to glycine 30. Residues phenylalanine 31–arginine 53 constitute a propeptide that is removed on maturation. 5 consecutive Cadherin domains span residues serine 54–phenylalanine 159, threonine 160–phenylalanine 268, proline 269–phenylalanine 383, serine 384–proline 486, and glutamate 487–proline 608. Over serine 54–alanine 615 the chain is Extracellular. Asparagine 165 and asparagine 255 each carry an N-linked (GlcNAc...) asparagine glycan. Residues valine 261 to arginine 289 form a disordered region. N-linked (GlcNAc...) asparagine glycans are attached at residues asparagine 437, asparagine 455, and asparagine 536. A helical membrane pass occupies residues leucine 616–leucine 636. At arginine 637 to serine 790 the chain is on the cytoplasmic side.

Its subcellular location is the cell membrane. Functionally, cadherins are calcium-dependent cell adhesion proteins. They preferentially interact with themselves in a homophilic manner in connecting cells; cadherins may thus contribute to the sorting of heterogeneous cell types. The chain is Cadherin-6 (CDH6) from Gallus gallus (Chicken).